A 375-amino-acid chain; its full sequence is Actin, cytoplasmic (375 aa).

Belongs to the actin family.

Its subcellular location is the cytoplasm. The protein localises to the cytoskeleton. It catalyses the reaction ATP + H2O = ADP + phosphate + H(+). Functionally, actins are highly conserved proteins that are involved in various types of cell motility and are ubiquitously expressed in all eukaryotic cells. This is Actin, cytoplasmic from Oxytricha trifallax (Sterkiella histriomuscorum).